The following is a 363-amino-acid chain: Peptide chain release factor 1 (363 aa).

Gln237 carries the post-translational modification N5-methylglutamine.

Belongs to the prokaryotic/mitochondrial release factor family. In terms of processing, methylated by PrmC. Methylation increases the termination efficiency of RF1.

The protein localises to the cytoplasm. Functionally, peptide chain release factor 1 directs the termination of translation in response to the peptide chain termination codons UAG and UAA. This is Peptide chain release factor 1 from Hydrogenovibrio crunogenus (strain DSM 25203 / XCL-2) (Thiomicrospira crunogena).